A 152-amino-acid polypeptide reads, in one-letter code: Small ribosomal subunit protein bS6 (152 aa).

Positions 96-152 are disordered; it reads HEEGPSAMLQKRDRDDRGPREGGDRGPRREFGDRPPRRDGDFQRGPRPDRAPREDRA.

Belongs to the bacterial ribosomal protein bS6 family.

Functionally, binds together with bS18 to 16S ribosomal RNA. The protein is Small ribosomal subunit protein bS6 of Rhizobium etli (strain ATCC 51251 / DSM 11541 / JCM 21823 / NBRC 15573 / CFN 42).